The following is a 533-amino-acid chain: Peptide chain release factor 3 (533 aa).

The tr-type G domain occupies 9 to 284; the sequence is ARRRTFAIIS…ALCELSPPPL (276 aa). Residues 18–25, 95–99, and 149–152 contribute to the GTP site; these read SHPDAGKT, DTPGH, and NKLD.

The protein belongs to the TRAFAC class translation factor GTPase superfamily. Classic translation factor GTPase family. PrfC subfamily.

It is found in the cytoplasm. Increases the formation of ribosomal termination complexes and stimulates activities of RF-1 and RF-2. It binds guanine nucleotides and has strong preference for UGA stop codons. It may interact directly with the ribosome. The stimulation of RF-1 and RF-2 is significantly reduced by GTP and GDP, but not by GMP. The sequence is that of Peptide chain release factor 3 from Cupriavidus taiwanensis (strain DSM 17343 / BCRC 17206 / CCUG 44338 / CIP 107171 / LMG 19424 / R1) (Ralstonia taiwanensis (strain LMG 19424)).